We begin with the raw amino-acid sequence, 491 residues long: Myocilin (491 aa).

The signal sequence occupies residues 1–18 (MPAVQLLLLACPVWDVGA). N43 carries an N-linked (GlcNAc...) asparagine glycan. Positions 98–171 (QETPEGLQRE…QEVARLRRGQ (74 aa)) form a coiled coil. The interval 151–189 (ENLARRLESSSQEVARLRRGQCPQTRDTARDVPPGSREV) is disordered. The Olfactomedin-like domain maps to 231–490 (GCGELVWVGE…MVTYDIKLSK (260 aa)). Residues C232 and C420 are joined by a disulfide bond. The Ca(2+) site is built by D367, N415, A416, I464, and D465.

In terms of assembly, homodimer (via N-terminus). Can also form higher oligomers. Interacts with OLFM3, FN1, NRCAM, GLDN and NFASC. Interacts (via N-terminus) with MYL2. Interacts with SFRP1, FRZB, FZD7, FZD10, FZD1 and WIF1; regulates Wnt signaling. Interacts with SNTA1; regulates muscle hypertrophy. Interacts with ERBB2 and ERBB3; activates ERBB2-ERBB3 signaling pathway. Interacts with SNCG; affects its secretion and its aggregation. Post-translationally, palmitoylated. In terms of processing, undergoes a calcium-dependent proteolytic cleavage at Arg-213 by CAPN2 in the endoplasmic reticulum. The result is the production of two fragments, one of 35 kDa containing the C-terminal olfactomedin-like domain, and another of 20 kDa containing the N-terminal leucine zipper-like domain. Glycosylated.

It is found in the secreted. It localises to the golgi apparatus. The protein resides in the cytoplasmic vesicle. The protein localises to the extracellular space. Its subcellular location is the extracellular matrix. It is found in the extracellular exosome. It localises to the mitochondrion. The protein resides in the mitochondrion intermembrane space. The protein localises to the mitochondrion inner membrane. Its subcellular location is the mitochondrion outer membrane. It is found in the rough endoplasmic reticulum. It localises to the cell projection. The protein resides in the cilium. The protein localises to the endoplasmic reticulum. Secreted glycoprotein regulating the activation of different signaling pathways in adjacent cells to control different processes including cell adhesion, cell-matrix adhesion, cytoskeleton organization and cell migration. Promotes substrate adhesion, spreading and formation of focal contacts. Negatively regulates cell-matrix adhesion and stress fiber assembly through Rho protein signal transduction. Modulates the organization of actin cytoskeleton by stimulating the formation of stress fibers through interactions with components of Wnt signaling pathways. Promotes cell migration through activation of PTK2 and the downstream phosphatidylinositol 3-kinase signaling. Plays a role in bone formation and promotes osteoblast differentiation in a dose-dependent manner through mitogen-activated protein kinase signaling. Mediates myelination in the peripheral nervous system through ERBB2/ERBB3 signaling. Plays a role as a regulator of muscle hypertrophy through the components of dystrophin-associated protein complex. Involved in positive regulation of mitochondrial depolarization. Plays a role in neurite outgrowth. May participate in the obstruction of fluid outflow in the trabecular meshwork. The protein is Myocilin (MYOC) of Macaca fascicularis (Crab-eating macaque).